The sequence spans 343 residues: MKVAILGAGCYRTHAAAGITNFSRASEVAKQVGIPEIAMTHSTILMGAELLHLVNEIDEIVIADPCFAEGNEMVVLDNFDYAKVMEAHLAGKAEEVMPEIRDAVKAKAKELPKPPKACIHFVNPEKVGLKVTADDKDAVKDADIVITWLPKGGSQPAIIEKFVANIKEGAIVTHACTIPTPKFAKIFKDLGRDDLNIISYHPGAVPEMKGQVFISEGFATEEAVENFFEIANTARGVAFKMPANLISPVCDMGSAVTAPVYAGILAYRDAVTQILGAPADFAQMMADEAITQILELMRNEGIKGMEDKLDPKALTGTADSMCFGPLADILPASLKVLEKHGKQ.

The protein belongs to the HMD family.

It carries out the reaction 5,10-methenyl-5,6,7,8-tetrahydromethanopterin + H2 = 5,10-methylenetetrahydromethanopterin + H(+). It functions in the pathway one-carbon metabolism; methanogenesis from CO(2); 5,10-methylene-5,6,7,8-tetrahydromethanopterin from 5,10-methenyl-5,6,7,8-tetrahydromethanopterin (hydrogen route): step 1/1. In terms of biological role, catalyzes the reversible reduction of methenyl-H(4)MPT(+) to methylene-H(4)MPT. This Methanococcus voltae protein is 5,10-methenyltetrahydromethanopterin hydrogenase (hmd).